Here is a 556-residue protein sequence, read N- to C-terminus: 2-succinyl-5-enolpyruvyl-6-hydroxy-3-cyclohexene-1-carboxylate synthase (556 aa).

The protein belongs to the TPP enzyme family. MenD subfamily. Homodimer. Mg(2+) is required as a cofactor. Mn(2+) serves as cofactor. The cofactor is thiamine diphosphate.

It catalyses the reaction isochorismate + 2-oxoglutarate + H(+) = 5-enolpyruvoyl-6-hydroxy-2-succinyl-cyclohex-3-ene-1-carboxylate + CO2. The protein operates within quinol/quinone metabolism; 1,4-dihydroxy-2-naphthoate biosynthesis; 1,4-dihydroxy-2-naphthoate from chorismate: step 2/7. It participates in quinol/quinone metabolism; menaquinone biosynthesis. Its function is as follows. Catalyzes the thiamine diphosphate-dependent decarboxylation of 2-oxoglutarate and the subsequent addition of the resulting succinic semialdehyde-thiamine pyrophosphate anion to isochorismate to yield 2-succinyl-5-enolpyruvyl-6-hydroxy-3-cyclohexene-1-carboxylate (SEPHCHC). In Shigella sonnei (strain Ss046), this protein is 2-succinyl-5-enolpyruvyl-6-hydroxy-3-cyclohexene-1-carboxylate synthase.